We begin with the raw amino-acid sequence, 310 residues long: Nucleotide-binding protein Mmc1_3333 (310 aa).

19 to 26 (GLSGAGKS) is a binding site for ATP.

Belongs to the RapZ-like family.

In terms of biological role, displays ATPase and GTPase activities. This is Nucleotide-binding protein Mmc1_3333 from Magnetococcus marinus (strain ATCC BAA-1437 / JCM 17883 / MC-1).